The following is a 1070-amino-acid chain: Phosphatidylinositol 4,5-bisphosphate 3-kinase catalytic subunit beta isoform (1070 aa).

The PI3K-ABD domain maps to 26 to 115; the sequence is SDGSIPVDFL…LPVLKLVTRS (90 aa). Residues 194 to 285 form the PI3K-RBD domain; that stretch reads GGKLIVAVHF…RALPHFILVE (92 aa). Residue S324 is modified to Phosphoserine. The C2 PI3K-type domain maps to 327–496; it reads WENNNPFQIV…NATALHVKFP (170 aa). The Nuclear localization signal motif lies at 410–418; the sequence is KVKTKKSTK. Residues 524–701 form the PIK helical domain; it reads ANVSSRGGKK…GVILEAYCRG (178 aa). One can recognise a PI3K/PI4K catalytic domain in the interval 772 to 1053; it reads YVEKCKYMDS…KFDEALRESW (282 aa). Residues 778-784 are G-loop; that stretch reads YMDSKMK. A catalytic loop region spans residues 916–924; sequence GIGDRHSDN. The segment at 935-961 is activation loop; sequence HIDFGHILGNFKSKFGIKRERVPFILT. S1070 carries the phosphoserine; by autocatalysis modification.

This sequence belongs to the PI3/PI4-kinase family. In terms of assembly, heterodimer of a catalytic subunit PIK3CB and a p85 regulatory subunit (PIK3R1, PIK3R2 or PIK3R3). Interaction with PIK3R2 is required for nuclear localization and nuclear export. Part of a complex with PIK3R1 and PTEN. Binding to PTEN may antagonize the lipid kinase activity under normal growth conditions. Part of a complex involved in autophagosome formation composed of PIK3C3 and PIK3R4. Interacts with BECN1, ATG14 and RAB5A. In terms of processing, autophosphorylation at Ser-1070 negatively regulates the phosphatidylinositol-4,5-bisphosphate 3-kinase activity. As to expression, expressed ubiquitously.

It localises to the cytoplasm. It is found in the nucleus. The enzyme catalyses a 1,2-diacyl-sn-glycero-3-phospho-(1D-myo-inositol-4,5-bisphosphate) + ATP = a 1,2-diacyl-sn-glycero-3-phospho-(1D-myo-inositol-3,4,5-trisphosphate) + ADP + H(+). It carries out the reaction 1-octadecanoyl-2-(5Z,8Z,11Z,14Z)-eicosatetraenoyl-sn-glycero-3-phospho-1D-myo-inositol 4,5-bisphosphate + ATP = 1-octadecanoyl-2-(5Z,8Z,11Z,14Z-eicosatetraenoyl)-sn-glycero-3-phospho-(1D-myo-inositol 3,4,5-triphosphate) + ADP + H(+). The catalysed reaction is L-seryl-[protein] + ATP = O-phospho-L-seryl-[protein] + ADP + H(+). Its pathway is phospholipid metabolism; phosphatidylinositol phosphate biosynthesis. In terms of biological role, phosphoinositide-3-kinase (PI3K) phosphorylates phosphatidylinositol derivatives at position 3 of the inositol ring to produce 3-phosphoinositides. Uses ATP and PtdIns(4,5)P2 (phosphatidylinositol 4,5-bisphosphate) to generate phosphatidylinositol 3,4,5-trisphosphate (PIP3). PIP3 plays a key role by recruiting PH domain-containing proteins to the membrane, including AKT1 and PDPK1, activating signaling cascades involved in cell growth, survival, proliferation, motility and morphology. Involved in the activation of AKT1 upon stimulation by G-protein coupled receptors (GPCRs) ligands such as CXCL12, sphingosine 1-phosphate, and lysophosphatidic acid. May also act downstream receptor tyrosine kinases. Required in different signaling pathways for stable platelet adhesion and aggregation. Plays a role in platelet activation signaling triggered by GPCRs, alpha-IIb/beta-3 integrins (ITGA2B/ ITGB3) and ITAM (immunoreceptor tyrosine-based activation motif)-bearing receptors such as GP6. Regulates the strength of adhesion of ITGA2B/ ITGB3 activated receptors necessary for the cellular transmission of contractile forces. Required for platelet aggregation induced by F2 (thrombin) and thromboxane A2 (TXA2). Has a role in cell survival. May have a role in cell migration. Involved in the early stage of autophagosome formation. Modulates the intracellular level of PtdIns3P (phosphatidylinositol 3-phosphate) and activates PIK3C3 kinase activity. May act as a scaffold, independently of its lipid kinase activity to positively regulate autophagy. May have a role in insulin signaling as scaffolding protein in which the lipid kinase activity is not required. May have a kinase-independent function in regulating cell proliferation and in clathrin-mediated endocytosis. Mediator of oncogenic signal in cell lines lacking PTEN. The lipid kinase activity is necessary for its role in oncogenic transformation. Required for the growth of ERBB2 and RAS driven tumors. Also has a protein kinase activity showing autophosphorylation. This is Phosphatidylinositol 4,5-bisphosphate 3-kinase catalytic subunit beta isoform (PIK3CB) from Homo sapiens (Human).